We begin with the raw amino-acid sequence, 161 residues long: Globin CTT-VIIB-10 (161 aa).

The N-terminal stretch at 1–16 (MKFFAVLALCIVGAIA) is a signal peptide. Positions 18–161 (PLTADEASLV…NTFAIVVPRL (144 aa)) constitute a Globin domain. Heme b-binding residues include His-76 and His-111.

Belongs to the globin family. In terms of assembly, homodimer.

The protein is Globin CTT-VIIB-10 (CTT-7B10) of Chironomus thummi thummi (Midge).